The sequence spans 110 residues: Hydrogenase maturation factor HypA (110 aa).

Histidine 2 contributes to the Ni(2+) binding site. Positions 70, 73, 86, and 89 each coordinate Zn(2+).

This sequence belongs to the HypA/HybF family.

Involved in the maturation of [NiFe] hydrogenases. Required for nickel insertion into the metal center of the hydrogenase. This Geobacter sulfurreducens (strain ATCC 51573 / DSM 12127 / PCA) protein is Hydrogenase maturation factor HypA.